The primary structure comprises 108 residues: UPF0235 protein MM_0822 (108 aa).

This sequence belongs to the UPF0235 family.

The protein is UPF0235 protein MM_0822 of Methanosarcina mazei (strain ATCC BAA-159 / DSM 3647 / Goe1 / Go1 / JCM 11833 / OCM 88) (Methanosarcina frisia).